Reading from the N-terminus, the 138-residue chain is Small ribosomal subunit protein uS11c (138 aa).

Residues 1-22 form a disordered region; the sequence is MAKPILRVGSRKNTRSASRKNV. Residues 9–22 are compositionally biased toward basic residues; that stretch reads GSRKNTRSASRKNV.

The protein belongs to the universal ribosomal protein uS11 family. As to quaternary structure, part of the 30S ribosomal subunit.

Its subcellular location is the plastid. The protein localises to the chloroplast. This Draba nemorosa (Woodland whitlowgrass) protein is Small ribosomal subunit protein uS11c.